A 452-amino-acid polypeptide reads, in one-letter code: Cobyrinate a,c-diamide synthase (452 aa).

Residues 244 to 437 (KIAYAYDEAF…VHINLYTYKE (194 aa)) enclose the GATase cobBQ-type domain. Catalysis depends on C327, which acts as the Nucleophile.

The protein belongs to the CobB/CbiA family. Mg(2+) serves as cofactor.

It carries out the reaction cob(II)yrinate + 2 L-glutamine + 2 ATP + 2 H2O = cob(II)yrinate a,c diamide + 2 L-glutamate + 2 ADP + 2 phosphate + 2 H(+). It functions in the pathway cofactor biosynthesis; adenosylcobalamin biosynthesis; cob(II)yrinate a,c-diamide from sirohydrochlorin (anaerobic route): step 10/10. Its function is as follows. Catalyzes the ATP-dependent amidation of the two carboxylate groups at positions a and c of cobyrinate, using either L-glutamine or ammonia as the nitrogen source. The chain is Cobyrinate a,c-diamide synthase from Caldanaerobacter subterraneus subsp. tengcongensis (strain DSM 15242 / JCM 11007 / NBRC 100824 / MB4) (Thermoanaerobacter tengcongensis).